The sequence spans 1749 residues: Transposon Ty1-NL2 Gag-Pol polyprotein (1749 aa).

Composition is skewed to polar residues over residues 1–23, 48–60, 71–97, and 129–152; these read MESQ…SVTS, TKAN…TPAS, SPQT…NQAN, and QFPQ…GNTF. Disordered regions lie at residues 1-97, 129-171, and 352-421; these read MESQ…NQAN, QFPQ…YVRP, and GSRN…SKST. Residues 153–165 are compositionally biased toward low complexity; that stretch reads TDSSSADSDMTST. The interval 299-401 is RNA-binding; it reads NNGIHINNKV…NSKSKTARAH (103 aa). Positions 402-418 are enriched in low complexity; sequence NVSTSNNSPSTDNDSIS. The active-site For protease activity; shared with dimeric partner is Asp461. The segment at 583–640 is integrase-type zinc finger-like; the sequence is NVHTSESTRKYPYPFIHRMLAHANAQTIRYSLKNNTITYFNESDVDWSSAIDYQCPDC. The Integrase catalytic domain occupies 660–835; that stretch reads NSYEPFQYLH…AGLDISTLLP (176 aa). Mg(2+) contacts are provided by Asp671 and Asp736. Positions 945–1166 are disordered; it reads PRNVLSKAVS…LGGIGDSNAY (222 aa). Residues 954–963 show a composition bias toward low complexity; sequence SPTDSTPPST. The segment covering 999–1009 has biased composition (polar residues); it reads STPQISDIEST. Residues 1032-1047 are compositionally biased toward basic and acidic residues; that stretch reads ESSHTSKSKDFRHSDS. 2 stretches are compositionally biased toward polar residues: residues 1048-1076 and 1089-1100; these read YSDN…QTSE and SIDTSSSESNSL. The Bipartite nuclear localization signal signature appears at 1172-1206; it reads KKRSLEDNETEIKVSRDTWNTKNMRSLEPPRSKKR. Residues 1332 to 1470 form the Reverse transcriptase Ty1/copia-type domain; sequence NNYYITQLDI…DILGLEIKYQ (139 aa). Residues Asp1340, Asp1421, Asp1422, Asp1604, Glu1646, and Asp1679 each coordinate Mg(2+). An RNase H Ty1/copia-type domain is found at 1604-1746; that stretch reads DASYGNQPYY…IKTFKLLTNK (143 aa).

In terms of assembly, the capsid protein forms a homotrimer, from which the VLPs are assembled. The protease is a homodimer, whose active site consists of two apposed aspartic acid residues. Post-translationally, initially, virus-like particles (VLPs) are composed of the structural unprocessed proteins Gag and Gag-Pol, and also contain the host initiator methionine tRNA (tRNA(i)-Met) which serves as a primer for minus-strand DNA synthesis, and a dimer of genomic Ty RNA. Processing of the polyproteins occurs within the particle and proceeds by an ordered pathway, called maturation. First, the protease (PR) is released by autocatalytic cleavage of the Gag-Pol polyprotein yielding capsid protein p45 and a Pol-p154 precursor protein. This cleavage is a prerequisite for subsequent processing of Pol-p154 at the remaining sites to release the mature structural and catalytic proteins. Maturation takes place prior to the RT reaction and is required to produce transposition-competent VLPs.

Its subcellular location is the cytoplasm. The protein localises to the nucleus. It carries out the reaction DNA(n) + a 2'-deoxyribonucleoside 5'-triphosphate = DNA(n+1) + diphosphate. The catalysed reaction is Endonucleolytic cleavage to 5'-phosphomonoester.. Capsid protein (CA) is the structural component of the virus-like particle (VLP), forming the shell that encapsulates the retrotransposons dimeric RNA genome. The particles are assembled from trimer-clustered units and there are holes in the capsid shells that allow for the diffusion of macromolecules. CA also has nucleocapsid-like chaperone activity, promoting primer tRNA(i)-Met annealing to the multipartite primer-binding site (PBS), dimerization of Ty1 RNA and initiation of reverse transcription. Functionally, the aspartyl protease (PR) mediates the proteolytic cleavages of the Gag and Gag-Pol polyproteins after assembly of the VLP. In terms of biological role, reverse transcriptase/ribonuclease H (RT) is a multifunctional enzyme that catalyzes the conversion of the retro-elements RNA genome into dsDNA within the VLP. The enzyme displays a DNA polymerase activity that can copy either DNA or RNA templates, and a ribonuclease H (RNase H) activity that cleaves the RNA strand of RNA-DNA heteroduplexes during plus-strand synthesis and hydrolyzes RNA primers. The conversion leads to a linear dsDNA copy of the retrotransposon that includes long terminal repeats (LTRs) at both ends. Its function is as follows. Integrase (IN) targets the VLP to the nucleus, where a subparticle preintegration complex (PIC) containing at least integrase and the newly synthesized dsDNA copy of the retrotransposon must transit the nuclear membrane. Once in the nucleus, integrase performs the integration of the dsDNA into the host genome. The chain is Transposon Ty1-NL2 Gag-Pol polyprotein (TY1B-NL2) from Saccharomyces cerevisiae (strain ATCC 204508 / S288c) (Baker's yeast).